The following is a 252-amino-acid chain: L-aspartate dehydrogenase (252 aa).

2 residues coordinate NAD(+): A119 and N175. H203 is an active-site residue.

The protein belongs to the L-aspartate dehydrogenase family.

The catalysed reaction is L-aspartate + NADP(+) + H2O = oxaloacetate + NH4(+) + NADPH + H(+). It carries out the reaction L-aspartate + NAD(+) + H2O = oxaloacetate + NH4(+) + NADH + H(+). Its pathway is cofactor biosynthesis; NAD(+) biosynthesis; iminoaspartate from L-aspartate (dehydrogenase route): step 1/1. Its function is as follows. Specifically catalyzes the NAD or NADP-dependent dehydrogenation of L-aspartate to iminoaspartate. The chain is L-aspartate dehydrogenase from Methanospirillum hungatei JF-1 (strain ATCC 27890 / DSM 864 / NBRC 100397 / JF-1).